Reading from the N-terminus, the 168-residue chain is Photosystem I assembly protein Ycf3 (168 aa).

TPR repeat units lie at residues 35–68 (AFAY…EMDP), 72–105 (SYIL…NPFL), and 120–153 (GEQA…TPGN).

It belongs to the Ycf3 family.

It is found in the plastid membrane. In terms of biological role, essential for the assembly of the photosystem I (PSI) complex. May act as a chaperone-like factor to guide the assembly of the PSI subunits. The polypeptide is Photosystem I assembly protein Ycf3 (Cuscuta gronovii (Common dodder)).